A 659-amino-acid polypeptide reads, in one-letter code: Alpha-amylase (659 aa).

Residues 1–27 form the signal peptide; it reads MFAKRFKTSLLPLFAGFLLLFHLVLAG. The propeptide occupies 28 to 41; it reads PAAASAETANKSNE. 5 residues coordinate Ca(2+): Asn142, Thr178, Asp187, Gly210, and Asp212. The Nucleophile role is filled by Asp217. His221 lines the Ca(2+) pocket. Residue Glu249 is the Proton donor of the active site.

Belongs to the glycosyl hydrolase 13 family. As to quaternary structure, monomer. The cofactor is Ca(2+).

It is found in the secreted. The enzyme catalyses Endohydrolysis of (1-&gt;4)-alpha-D-glucosidic linkages in polysaccharides containing three or more (1-&gt;4)-alpha-linked D-glucose units.. In Bacillus subtilis (strain 168), this protein is Alpha-amylase (amyE).